A 439-amino-acid chain; its full sequence is Glutamyl-tRNA reductase (439 aa).

Residues 48–51, Ser-107, 112–114, and Gln-118 each bind substrate; these read TCNR and EPQ. Cys-49 acts as the Nucleophile in catalysis. 187–192 provides a ligand contact to NADP(+); it reads GAGEMA.

The protein belongs to the glutamyl-tRNA reductase family. Homodimer.

The enzyme catalyses (S)-4-amino-5-oxopentanoate + tRNA(Glu) + NADP(+) = L-glutamyl-tRNA(Glu) + NADPH + H(+). It functions in the pathway porphyrin-containing compound metabolism; protoporphyrin-IX biosynthesis; 5-aminolevulinate from L-glutamyl-tRNA(Glu): step 1/2. Catalyzes the NADPH-dependent reduction of glutamyl-tRNA(Glu) to glutamate 1-semialdehyde (GSA). This is Glutamyl-tRNA reductase from Maridesulfovibrio salexigens (strain ATCC 14822 / DSM 2638 / NCIMB 8403 / VKM B-1763) (Desulfovibrio salexigens).